Consider the following 554-residue polypeptide: CTP synthase (554 aa).

Positions 1-279 are amidoligase domain; the sequence is MSQPRAEHVT…DAFLIRRLDL (279 aa). A CTP-binding site is contributed by Ser21. Ser21 contacts UTP. Residues 22-27 and Asp79 each bind ATP; that span reads SLGKGL. Mg(2+) contacts are provided by Asp79 and Glu153. CTP contacts are provided by residues 160–162, 200–205, and Lys236; these read DIE and KTKPTQ. Residues 200-205 and Lys236 contribute to the UTP site; that span reads KTKPTQ. Positions 304–551 constitute a Glutamine amidotransferase type-1 domain; it reads TVALVGKYID…VKAGLKHKND (248 aa). Gly367 contacts L-glutamine. The active-site Nucleophile; for glutamine hydrolysis is Cys394. Residues 395–398, Glu417, and Arg478 contribute to the L-glutamine site; that span reads LGLQ. Catalysis depends on residues His524 and Glu526.

This sequence belongs to the CTP synthase family. In terms of assembly, homotetramer.

It catalyses the reaction UTP + L-glutamine + ATP + H2O = CTP + L-glutamate + ADP + phosphate + 2 H(+). The catalysed reaction is L-glutamine + H2O = L-glutamate + NH4(+). It carries out the reaction UTP + NH4(+) + ATP = CTP + ADP + phosphate + 2 H(+). It functions in the pathway pyrimidine metabolism; CTP biosynthesis via de novo pathway; CTP from UDP: step 2/2. Allosterically activated by GTP, when glutamine is the substrate; GTP has no effect on the reaction when ammonia is the substrate. The allosteric effector GTP functions by stabilizing the protein conformation that binds the tetrahedral intermediate(s) formed during glutamine hydrolysis. Inhibited by the product CTP, via allosteric rather than competitive inhibition. Catalyzes the ATP-dependent amination of UTP to CTP with either L-glutamine or ammonia as the source of nitrogen. Regulates intracellular CTP levels through interactions with the four ribonucleotide triphosphates. The chain is CTP synthase from Corynebacterium kroppenstedtii (strain DSM 44385 / JCM 11950 / CIP 105744 / CCUG 35717).